The primary structure comprises 292 residues: 2-(5''-triphosphoribosyl)-3'-dephosphocoenzyme-A synthase (292 aa).

Belongs to the CitG/MdcB family.

The catalysed reaction is 3'-dephospho-CoA + ATP = 2'-(5''-triphospho-alpha-D-ribosyl)-3'-dephospho-CoA + adenine. Its function is as follows. Catalyzes the formation of 2-(5''-triphosphoribosyl)-3'-dephosphocoenzyme-A, the precursor of the prosthetic group of the holo-acyl carrier protein (gamma chain) of citrate lyase, from ATP and dephospho-CoA. The protein is 2-(5''-triphosphoribosyl)-3'-dephosphocoenzyme-A synthase of Escherichia coli (strain SMS-3-5 / SECEC).